Reading from the N-terminus, the 1084-residue chain is CRISPR-associated endonuclease Cas9 (1084 aa).

The active-site For RuvC-like nuclease domain is aspartate 8. Positions 8, 496, and 500 each coordinate Mn(2+). The 162-residue stretch at 504–665 (TEKRAREMDG…MDEEIDARSM (162 aa)) folds into the HNH Cas9-type domain. The active-site Proton acceptor for HNH nuclease domain is the histidine 573. Histidine 727 is a binding site for Mn(2+).

The protein belongs to the CRISPR-associated protein Cas9 family. Subtype II-C subfamily. Monomer. Binds crRNA and tracrRNA. Mg(2+) serves as cofactor.

In terms of biological role, CRISPR (clustered regularly interspaced short palindromic repeat) is an adaptive immune system that provides protection against mobile genetic elements (viruses, transposable elements and conjugative plasmids). CRISPR clusters contain spacers, sequences complementary to antecedent mobile elements, and target invading nucleic acids. CRISPR clusters are transcribed and processed into CRISPR RNA (crRNA). In type II CRISPR systems correct processing of pre-crRNA requires a trans-encoded small RNA (tracrRNA), endogenous ribonuclease 3 (rnc) and this protein. The tracrRNA serves as a guide for ribonuclease 3-aided processing of pre-crRNA. Subsequently Cas9/crRNA/tracrRNA endonucleolytically cleaves linear or circular dsDNA target complementary to the spacer; Cas9 is inactive in the absence of the 2 guide RNAs (gRNA). Cas9 recognizes the protospacer adjacent motif (PAM) in the CRISPR repeat sequences to help distinguish self versus nonself, as targets within the bacterial CRISPR locus do not have PAMs. PAM recognition is also required for catalytic activity. This Corynebacterium diphtheriae (strain ATCC 700971 / NCTC 13129 / Biotype gravis) protein is CRISPR-associated endonuclease Cas9.